The chain runs to 222 residues: Large ribosomal subunit protein uL4 (222 aa).

The interval 42–100 is disordered; it reads AAGRQGTHSTKTRGEVRGGGKKPYRQKGTGRARQGSVRAPQFTGGGTVHGPKPRDYAQR. A compositionally biased stretch (basic residues) spans 60–71; sequence GGKKPYRQKGTG.

Belongs to the universal ribosomal protein uL4 family. As to quaternary structure, part of the 50S ribosomal subunit.

Functionally, one of the primary rRNA binding proteins, this protein initially binds near the 5'-end of the 23S rRNA. It is important during the early stages of 50S assembly. It makes multiple contacts with different domains of the 23S rRNA in the assembled 50S subunit and ribosome. Its function is as follows. Forms part of the polypeptide exit tunnel. The protein is Large ribosomal subunit protein uL4 of Thermobifida fusca (strain YX).